We begin with the raw amino-acid sequence, 1192 residues long: MEAFEISDFKEHAKKKSMWAGALNKVTISGLMGVFTEDEDLMALPIHRDHCPALLKIFDELIVNATDHERACHSKTKKVTYIKISFDKGVFSCENDGPGIPIAKHEQASLIAKRDVYVPEVASCFFLAGTNINKAKDCIKGGTNGVGLKLAMVHSQWAILTTADGAQKYVQQINQRLDIIEPPTITPSREMFTRIELMPVYQELGYAEPLSETEQADLSAWIYLRACQCAAYVGKGTTIYYNDKPCRTGSVMALAKMYTLLSAPNSTIHTATIKADAKPYSLHPLQVAAVVSPKFKKFEHVSIINGVNCVKGEHVTFLKKTINEMVIKKFQQTIKDKNRKTTLRDSCSNIFVVIVGSIPGIEWTGQRKDELSIAENVFKTHYSIPSSFLTSMTRSIVDILLQSISKKDNHKQVDVDKYTRARNAGGKRAQDCMLLAAEGDSALSLLRTGLTLGKSNPSGPSFDFCGMISLGGVIMNACKKVTNITTDSGETIMVRNEQLTNNKVLQGIVQVLGLDFNCHYKTQEERAKLRYGCIVACVDQDLDGCGKILGLLLAYFHLFWPQLIIHGFVKRLLTPLIRVYEKGKTMPVEFYYEQEFDAWAKKQTSLVNHTVKYYKGLAAHDTHEVKSMFKHFDNMVYTFTLDDSAKELFHIYFGGESELRKRELCTGVVPLTETQTQSIHSVRRIPCSLHLQVDTKAYKLDAIERQIPNFLDGMTRARRKILAGGVKCFASNNRERKVFQFGGYVADHMFYHHGDMSLNTSIIKAAQYYPGSSHLYPVFIGIGSFGSRHLGGKDAGSPRYISVQLASEFIKTMFPAEDSWLLPYVFEDGQRAEPEYYVPVLPLAIMEYGANPSEGWKYTTWARQLEDILALVRAYVDKDNPKHELLHYAIKHKITILPLRPSNYNFKGHLKRFGQYYYSYGTYDISEQRNIITITELPLRVPTVAYIESIKKSSNRMTFIEEIIDYSSSETIEILVKLKPNSLNRIVEEFKETEEQDSIENFLRLRNCLHSHLNFVKPKGGIIEFNSYYEILYAWLPYRRELYQKRLMREHAVLKLRIIMETAIVRYINESAELNLSHYEDEKEASRILSEHGFPPLNHTLIISPEFASIEELNQKALQGCYTYILSLQARELLIAAKTRRVEKIKKMQARLDKVEQLLQESPFPGASVWLEEIDAVEKAIIKGRNTQWKFH.

ATP is bound by residues Asn-64, Asn-95, and 142–149 (GTNGVGLK). 3 residues coordinate Mg(2+): Glu-438, Asp-539, and Asp-541. One can recognise a Topo IIA-type catalytic domain in the interval 707 to 1174 (IPNFLDGMTR…PGASVWLEEI (468 aa)). Tyr-800 functions as the O-(5'-phospho-DNA)-tyrosine intermediate in the catalytic mechanism.

It belongs to the type II topoisomerase family. Mg(2+) is required as a cofactor. It depends on Mn(2+) as a cofactor. Requires Ca(2+) as cofactor.

It is found in the host cytoplasm. It carries out the reaction ATP-dependent breakage, passage and rejoining of double-stranded DNA.. Its function is as follows. Type II topoisomerase. Processively relaxes supercoiled DNA. Displays DNA-supercoiling activity only when associated with the viral histone-like protein. The polypeptide is DNA topoisomerase 2 (TOP) (African swine fever virus (strain Badajoz 1971 Vero-adapted) (Ba71V)).